The sequence spans 135 residues: Ribosome-binding factor A (135 aa).

It belongs to the RbfA family. Monomer. Binds 30S ribosomal subunits, but not 50S ribosomal subunits or 70S ribosomes.

It is found in the cytoplasm. One of several proteins that assist in the late maturation steps of the functional core of the 30S ribosomal subunit. Associates with free 30S ribosomal subunits (but not with 30S subunits that are part of 70S ribosomes or polysomes). Required for efficient processing of 16S rRNA. May interact with the 5'-terminal helix region of 16S rRNA. This is Ribosome-binding factor A from Sinorhizobium fredii (strain NBRC 101917 / NGR234).